The sequence spans 2227 residues: Genome polyprotein (2227 aa).

2 consecutive short sequence motifs ((L)YPX(n)L motif) follow at residues 167-171 and 200-205; these read YPHGL and YPVWEL. Residues 766 to 836 form an involved in P1-2A pentamerization region; that stretch reads MMSRIAAGDL…PRKKKGLFSQ (71 aa). The chain crosses the membrane as a helical span at residues 1010–1030; that stretch reads VTVEIINTVLCFVKSGILLYV. The segment at 1043–1070 is membrane-penetrating ability; it reads IGLLRVMNYVDIGCSVISCGKVFSKMLE. The stretch at 1127-1152 forms a coiled coil; that stretch reads KKKDILNILKDNQQKIEKAIEEADKF. The SF3 helicase domain occupies 1204–1366; sequence HQKLKNLGSI…SFSKNPHNDM (163 aa). 1230-1237 is an ATP binding site; it reads GKRGGGKS. Residues 1462–1482 traverse the membrane as a helical segment; it reads WVAVGAAVGILGVLVGGWFVY. O-(5'-phospho-RNA)-tyrosine is present on tyrosine 1499. Residues 1514–1728 form the Peptidase C3 domain; sequence DPVESQSTLE…VAKLVTQEMF (215 aa). Active-site for protease 3C activity residues include histidine 1563, aspartate 1603, and cysteine 1691. The RdRp catalytic domain occupies 1976–2097; it reads DVGLDLDFSA…VFSRDVQIDN (122 aa).

The protein belongs to the picornaviridae polyprotein family. In terms of assembly, homodimer. Homomultimer; probably interacts with membranes in a multimeric form. Seems to assemble into amyloid-like fibers. Homodimer. Monomer. Interacts with protein 3CD. As to quaternary structure, interacts with host ACBD3. In terms of assembly, interacts with protein 3AB. Interacts with human MAVS. As to quaternary structure, homodimer; disulfide-linked. In terms of assembly, homopentamer. Homooligomer. Interacts with capsid protein VP2. Interacts with capsid protein VP3. As to quaternary structure, interacts with capsid protein VP1. Interacts with capsid protein VP3. In terms of assembly, interacts with capsid protein VP1. Interacts with capsid protein VP2. Specific enzymatic cleavages by viral protease in vivo yield a variety of precursors and mature proteins. Polyprotein processing intermediates are produced, such as P1-2A which is a functional precursor of the structural proteins, VP0 which is a VP4-VP2 precursor, VP1-2A precursor, 3ABC precursor which is a stable and catalytically active precursor of 3A, 3B and 3C proteins, 3AB and 3CD precursors. The assembly signal 2A is removed from VP1-2A by a host protease, possibly host Cathepsin L. This cleavage occurs over a region of 3 amino-acids probably generating VP1 proteins with heterogeneous C-termini. In terms of processing, during virion maturation, immature virions are rendered infectious following cleavage of VP0 into VP4 and VP2. This maturation seems to be an autocatalytic event triggered by the presence of RNA in the capsid and is followed by a conformational change of the particle. Post-translationally, the assembly signal 2A is removed from VP1-2A by a host protease, possibly host Cathepsin L in naked virions. This cleavage does not occur in enveloped virions. This cleavage occurs over a region of 3 amino-acids probably generating VP1 proteins with heterogeneous C-termini. VPg is uridylylated prior to priming replication into VPg-pUpU. In terms of processing, unlike other picornaviruses, does not seem to be myristoylated.

It is found in the virion. Its subcellular location is the host endosome. The protein resides in the host multivesicular body. It localises to the host membrane. The protein localises to the host mitochondrion outer membrane. It is found in the host cytoplasm. Its subcellular location is the host cytoplasmic vesicle membrane. The catalysed reaction is RNA(n) + a ribonucleoside 5'-triphosphate = RNA(n+1) + diphosphate. It catalyses the reaction a ribonucleoside 5'-triphosphate + H2O = a ribonucleoside 5'-diphosphate + phosphate + H(+). It carries out the reaction Selective cleavage of Gln-|-Gly bond in the poliovirus polyprotein. In other picornavirus reactions Glu may be substituted for Gln, and Ser or Thr for Gly.. Capsid proteins VP1, VP2, and VP3 form a closed capsid enclosing the viral positive strand RNA genome. All these proteins contain a beta-sheet structure called beta-barrel jelly roll. Together they form an icosahedral capsid (T=3) composed of 60 copies of each VP1, VP2, and VP3, with a diameter of approximately 300 Angstroms. VP1 is situated at the 12 fivefold axes, whereas VP2 and VP3 are located at the quasi-sixfold axes. The naked capsid interacts with the host receptor HAVCR1 to provide virion attachment to and probably entry into the target cell. In terms of biological role, VP0 precursor is a component of the immature procapsids. Functionally, plays a role in the assembly of the 12 pentamers into an icosahedral structure. Has not been detected in mature virions, supposedly owing to its small size. Its function is as follows. Precursor component of immature procapsids that corresponds to an extended form of the structural protein VP1. After maturation, possibly by the host Cathepsin L, the assembly signal 2A is cleaved to give rise to the mature VP1 protein. Functions as a viroporin. Affects membrane integrity and causes an increase in membrane permeability. Involved in host intracellular membrane rearrangements probably to give rise to the viral factories. Does not disrupt calcium homeostasis or glycoprotein trafficking. Antagonizes the innate immune response of the host by suppressing IFN-beta synthesis, which it achieves by interfering with the RIG-I/IFIH1 pathway. In terms of biological role, affects membrane integrity and causes an increase in membrane permeability. Functionally, associates with and induces structural rearrangements of intracellular membranes. Displays RNA-binding activity. Its function is as follows. The precursor 3ABC is targeted to the mitochondrial membrane where protease 3C activity cleaves and inhibits the host antiviral protein MAVS, thereby disrupting activation of IRF3 through the IFIH1/MDA5 pathway. In vivo, the protease activity of 3ABC precursor is more efficient in cleaving the 2BC precursor than that of protein 3C. The 3ABC precursor may therefore play a role in the proteolytic processing of the polyprotein. Possible viroporin. Interacts with the 3CD precursor and with RNA structures found at both the 5'- and 3'-termini of the viral genome. Since the 3AB precursor contains the hydrophobic domain 3A, it probably anchors the whole viral replicase complex to intracellular membranes on which viral RNA synthesis occurs. In terms of biological role, may serve as membrane anchor to the 3AB and 3ABC precursors via its hydrophobic domain. May interact with RNA. Functionally, acts as a primer for viral RNA replication and remains covalently bound to viral genomic RNA. VPg is uridylylated prior to priming replication into VPg-pUpU. The VPg-pUpU is then used as primer on the genomic RNA poly(A) by the RNA-dependent RNA polymerase to replicate the viral genome. Its function is as follows. Cysteine protease that generates mature viral proteins from the precursor polyprotein. In addition to its proteolytic activity, it binds to viral RNA, and thus influences viral genome replication. RNA and substrate bind cooperatively to the protease. Cleaves IKBKG/NEMO to impair innate immune signaling. Cleaves host PABPC1 which may participate in the switch of viral translation to RNA synthesis. Interacts with the 3AB precursor and with RNA structures found at both the 5'- and 3'-termini of the viral genome. Disrupts TLR3 signaling by degrading the host adapter protein TICAM1/TRIF. In terms of biological role, replicates genomic and antigenomic RNA by recognizing replications specific signals. This is Genome polyprotein from Cercopithecus hamlyni (Owl-faced monkey).